The primary structure comprises 612 residues: Sulfite reductase [NADPH] hemoprotein beta-component (612 aa).

The tract at residues Met-1–Glu-26 is disordered. 4 residues coordinate [4Fe-4S] cluster: Cys-469, Cys-475, Cys-514, and Cys-518. Cys-518 contacts siroheme.

This sequence belongs to the nitrite and sulfite reductase 4Fe-4S domain family. Alpha(8)-beta(8). The alpha component is a flavoprotein, the beta component is a hemoprotein. Siroheme serves as cofactor. It depends on [4Fe-4S] cluster as a cofactor.

It catalyses the reaction hydrogen sulfide + 3 NADP(+) + 3 H2O = sulfite + 3 NADPH + 4 H(+). Its pathway is sulfur metabolism; hydrogen sulfide biosynthesis; hydrogen sulfide from sulfite (NADPH route): step 1/1. Functionally, component of the sulfite reductase complex that catalyzes the 6-electron reduction of sulfite to sulfide. This is one of several activities required for the biosynthesis of L-cysteine from sulfate. The sequence is that of Sulfite reductase [NADPH] hemoprotein beta-component from Methylorubrum extorquens (strain ATCC 14718 / DSM 1338 / JCM 2805 / NCIMB 9133 / AM1) (Methylobacterium extorquens).